The chain runs to 180 residues: MKNNTIRNVVATGIGAALFVVIGMINIPTPVPNTSIQLQYPLQALFSVIFGPIVGFLMGFIGHAIKDAMSGGGLWWFWIAGSGVFGLLVGFFRKFFRVEEGKFEVKDIIRFNLIQFGANAIAWLIGPIGDVIVSGEPVNKVIAQSIVAILVNSATVAVIGTVLLTAYARTRTRAGSLKKD.

5 helical membrane passes run Val9–Thr29, Leu45–Ile65, Gly72–Phe92, Leu113–Val133, and Ile146–Ala166.

Belongs to the UPF0397 family.

It is found in the cell membrane. This Streptococcus sanguinis (strain SK36) protein is UPF0397 protein SSA_0592.